We begin with the raw amino-acid sequence, 597 residues long: Tubulin polyglutamylase ttll-4 (597 aa).

The span at 1–18 (MSSGYSSAPSVSHTSSEA) shows a compositional bias: polar residues. Disordered stretches follow at residues 1–39 (MSSG…DEQR) and 80–107 (SKSK…FLKS). Residues 26-35 (YEDGVDEEAS) are compositionally biased toward acidic residues. One can recognise a TTL domain in the interval 134–472 (QSRLTWCHNS…HVPPSFDKLH (339 aa)). ATP-binding positions include Lys-250, 256 to 257 (RG), 278 to 281 (QHYI), and 291 to 293 (KFD). Arg-256 is a binding site for a protein. Arg-317 serves as a coordination point for L-glutamate. 338–339 (TN) serves as a coordination point for ATP. The L-glutamate site is built by Tyr-340, Ser-341, and Lys-358. Mg(2+)-binding residues include Asp-418, Glu-431, and Asn-433. An L-glutamate-binding site is contributed by Lys-449.

The protein belongs to the tubulin--tyrosine ligase family. Mg(2+) serves as cofactor.

It carries out the reaction L-glutamyl-[protein] + L-glutamate + ATP = gamma-L-glutamyl-L-glutamyl-[protein] + ADP + phosphate + H(+). Functionally, monoglutamylase which modifies tubulin, adding a single glutamate on the gamma-carboxyl group of specific glutamate residues of target proteins. Involved in the side-chain initiation step of the polyglutamylation reaction but not in the elongation step. Preferentially modifies beta-tail tubulin over the alpha-tubulin. Involved in side-chain glutamylation of tubulin in sensory cilia. Together with ttll-5 and ttll-11, required for male mating. This chain is Tubulin polyglutamylase ttll-4 (ttll-4), found in Caenorhabditis briggsae.